We begin with the raw amino-acid sequence, 22 residues long: Conantokin-Oc (22 aa).

A disordered region spans residues G1 to A22. A 4-carboxyglutamate mark is found at E3, E4, E10, and E18.

Expressed by the venom duct.

The protein resides in the secreted. In terms of biological role, conantokins inhibit N-methyl-D-aspartate (NMDA) receptors. The polypeptide is Conantokin-Oc (Conus ochroleucus (Perfect cone)).